Consider the following 398-residue polypeptide: Enolase (398 aa).

Glutamine 154 is a binding site for (2R)-2-phosphoglycerate. Residue glutamate 196 is the Proton donor of the active site. Mg(2+) contacts are provided by aspartate 232, glutamate 273, and aspartate 300. Residues lysine 325, arginine 354, serine 355, and lysine 376 each contribute to the (2R)-2-phosphoglycerate site. Residue lysine 325 is the Proton acceptor of the active site.

This sequence belongs to the enolase family. Requires Mg(2+) as cofactor.

Its subcellular location is the cytoplasm. The protein resides in the secreted. It is found in the cell surface. The catalysed reaction is (2R)-2-phosphoglycerate = phosphoenolpyruvate + H2O. The protein operates within carbohydrate degradation; glycolysis; pyruvate from D-glyceraldehyde 3-phosphate: step 4/5. In terms of biological role, catalyzes the reversible conversion of 2-phosphoglycerate (2-PG) into phosphoenolpyruvate (PEP). It is essential for the degradation of carbohydrates via glycolysis. The chain is Enolase from Halobacterium salinarum (strain ATCC 700922 / JCM 11081 / NRC-1) (Halobacterium halobium).